The primary structure comprises 326 residues: UDP-3-O-acylglucosamine N-acyltransferase (326 aa).

H225 serves as the catalytic Proton acceptor.

The protein belongs to the transferase hexapeptide repeat family. LpxD subfamily. In terms of assembly, homotrimer.

The enzyme catalyses a UDP-3-O-[(3R)-3-hydroxyacyl]-alpha-D-glucosamine + a (3R)-hydroxyacyl-[ACP] = a UDP-2-N,3-O-bis[(3R)-3-hydroxyacyl]-alpha-D-glucosamine + holo-[ACP] + H(+). It functions in the pathway bacterial outer membrane biogenesis; LPS lipid A biosynthesis. In terms of biological role, catalyzes the N-acylation of UDP-3-O-acylglucosamine using 3-hydroxyacyl-ACP as the acyl donor. Is involved in the biosynthesis of lipid A, a phosphorylated glycolipid that anchors the lipopolysaccharide to the outer membrane of the cell. This Acidovorax ebreus (strain TPSY) (Diaphorobacter sp. (strain TPSY)) protein is UDP-3-O-acylglucosamine N-acyltransferase.